Consider the following 105-residue polypeptide: Co-chaperonin GroES 3 (105 aa).

This sequence belongs to the GroES chaperonin family. As to quaternary structure, heptamer of 7 subunits arranged in a ring. Interacts with the chaperonin GroEL.

It is found in the cytoplasm. Together with the chaperonin GroEL, plays an essential role in assisting protein folding. The GroEL-GroES system forms a nano-cage that allows encapsulation of the non-native substrate proteins and provides a physical environment optimized to promote and accelerate protein folding. GroES binds to the apical surface of the GroEL ring, thereby capping the opening of the GroEL channel. This is Co-chaperonin GroES 3 from Rhizobium meliloti (strain 1021) (Ensifer meliloti).